The following is a 107-amino-acid chain: MMKALVVVALLVTLISYSSSEGIDDLEADELLSLMANEQTRKECIPKHHECTSNKHGCCRGNFFKYKCQCTTVVTQDGEQTERCFCGTPPHHKAAELVVGFGKKIFG.

The signal sequence occupies residues 1–20 (MMKALVVVALLVTLISYSSS). The propeptide occupies 21-41 (EGIDDLEADELLSLMANEQTR). 4 disulfide bridges follow: Cys44–Cys59, Cys51–Cys68, Cys58–Cys86, and Cys70–Cys84.

This sequence belongs to the neurotoxin 19 (CSTX) family. 04 (U1-Lctx) subfamily. In terms of tissue distribution, expressed by the venom gland.

Its subcellular location is the secreted. This is U1-lycotoxin-Ls1b from Lycosa singoriensis (Wolf spider).